The following is a 486-amino-acid chain: N-succinylglutamate 5-semialdehyde dehydrogenase (486 aa).

220–225 (GSSRTG) contacts NAD(+). Residues Glu243 and Cys277 contribute to the active site.

This sequence belongs to the aldehyde dehydrogenase family. AstD subfamily.

The enzyme catalyses N-succinyl-L-glutamate 5-semialdehyde + NAD(+) + H2O = N-succinyl-L-glutamate + NADH + 2 H(+). It participates in amino-acid degradation; L-arginine degradation via AST pathway; L-glutamate and succinate from L-arginine: step 4/5. In terms of biological role, catalyzes the NAD-dependent reduction of succinylglutamate semialdehyde into succinylglutamate. In Shewanella sp. (strain W3-18-1), this protein is N-succinylglutamate 5-semialdehyde dehydrogenase.